Reading from the N-terminus, the 145-residue chain is Probable inactive ribonuclease-like protein 12 (145 aa).

Positions 1–19 (MVLMVVVFLLLLFWENELT) are cleaved as a signal peptide.

It belongs to the pancreatic ribonuclease family.

The protein resides in the secreted. In terms of biological role, does not exhibit any ribonuclease activity. In Mus musculus (Mouse), this protein is Probable inactive ribonuclease-like protein 12 (Rnase12).